Here is a 135-residue protein sequence, read N- to C-terminus: Hemoglobin subunit alpha (135 aa).

One can recognise a Globin domain in the interval 1 to 135 (AAVVALWGKI…VALALAERYK (135 aa)). His-52 serves as a coordination point for O2. His-81 is a binding site for heme b.

The protein belongs to the globin family. Hb1 is a heterotetramer of two alpha chains and two beta-1 chains. Hb2 is a heterotetramer of two alpha chains and two beta-2 chains. Post-translationally, the N-terminus is blocked. Red blood cells.

In terms of biological role, involved in oxygen transport from gills to the various peripheral tissues. In Dissostichus eleginoides (Patagonian toothfish), this protein is Hemoglobin subunit alpha.